Consider the following 244-residue polypeptide: Protein YIPF4 (244 aa).

Topologically, residues 1–113 (MQPPGPPPAY…FNRQVVRDNP (113 aa)) are cytoplasmic. Residues 114–134 (DFWGPLAVVLFFSMISLYGQF) form a helical membrane-spanning segment. Residues 135–138 (RVVS) lie on the Extracellular side of the membrane. Residues 139–159 (WIITIWIFGSLTIFLLARVLG) form a helical membrane-spanning segment. Residues 160–166 (GEVAYGQ) lie on the Cytoplasmic side of the membrane. Residues 167–187 (VLGVIGYSLLPLIVIAPVLLV) traverse the membrane as a helical segment. Residues 188–195 (VGSFEVVS) are Extracellular-facing. Residues 196-216 (TLIKLFGVFWAAYSAASLLVG) form a helical membrane-spanning segment. At 217–223 (EEFKTKK) the chain is on the cytoplasmic side. A helical transmembrane segment spans residues 224–244 (PLLIYPIFLLYIYFLSLYTGV).

The protein belongs to the YIP1 family. Interacts with YIPF3 and YIPF5. As to quaternary structure, (Microbial infection) Interacts with human papillomavirus (HPV) E5 proteins. As to expression, expressed in keratinocytes (at protein level).

It localises to the golgi apparatus. Its subcellular location is the cis-Golgi network membrane. Functionally, involved in the maintenance of the Golgi structure. In Homo sapiens (Human), this protein is Protein YIPF4 (YIPF4).